The primary structure comprises 62 residues: Prokaryotic ubiquitin-like protein Pup (62 aa).

The tract at residues M1–D36 is disordered. Positions D18 to Y56 are ARC ATPase binding. Q62 bears the Deamidated glutamine mark. An Isoglutamyl lysine isopeptide (Gln-Lys) (interchain with K-? in acceptor proteins) cross-link involves residue Q62.

This sequence belongs to the prokaryotic ubiquitin-like protein family. Strongly interacts with the proteasome-associated ATPase ARC through a hydrophobic interface; the interacting region of Pup lies in its C-terminal half. There is one Pup binding site per ARC hexamer ring. Post-translationally, is modified by deamidation of its C-terminal glutamine to glutamate by the deamidase Dop, a prerequisite to the subsequent pupylation process.

Its pathway is protein degradation; proteasomal Pup-dependent pathway. Its function is as follows. Protein modifier that is covalently attached to lysine residues of substrate proteins, thereby targeting them for proteasomal degradation. The tagging system is termed pupylation. The chain is Prokaryotic ubiquitin-like protein Pup from Corynebacterium kroppenstedtii (strain DSM 44385 / JCM 11950 / CIP 105744 / CCUG 35717).